A 416-amino-acid chain; its full sequence is MLLKLKCTVNNYAWGPKGNSSMAGSLALDGGHIPNLDKDKPYAEFWVGTHANGPAHVIEKDIALKQLLATSPELQGKHEKGNLSFLFKVLSVLGPLSIQIHPTKEQGKLLHATDPKNYPDDNHKPEIAIALTEFELLSGFRQHSQISEYLKLYSEIQELLTEEEKSQIDSLGSYGESSAQVLKKIFSRIWRTPKEKLQIVVDKLARRIQGHENKTALDEIIVYLFTLYPGDVGVFAPIFLNYFKLQPGEATFLEPNMPHAYLKGDCVECMADSDNTIRAGLTPKYIDVESLVEMLNYDETLLPKYIPNELDDGSLLFTPRGIDEFWVQEVKGPAGSIYQLPYSESCSVLTVLYGTATVTLGDASQVLNRGEVVFIGATHDAERPKINISDDFLAFRAFTPSPRALESLSNKRLIID.

4 residues coordinate Zn(2+): glutamine 99, histidine 101, glutamate 126, and histidine 259. Arginine 278 is a catalytic residue.

It belongs to the mannose-6-phosphate isomerase type 1 family. It depends on Zn(2+) as a cofactor.

It localises to the cytoplasm. The catalysed reaction is D-mannose 6-phosphate = D-fructose 6-phosphate. It participates in nucleotide-sugar biosynthesis; GDP-alpha-D-mannose biosynthesis; alpha-D-mannose 1-phosphate from D-fructose 6-phosphate: step 1/2. Functionally, involved in the synthesis of the GDP-mannose and dolichol-phosphate-mannose required for a number of critical mannosyl transfer reactions. The polypeptide is Probable mannose-6-phosphate isomerase (Caenorhabditis elegans).